We begin with the raw amino-acid sequence, 42 residues long: Perlinhibin-related protein (42 aa).

In terms of processing, contains four disulfide bonds.

Inhibitor of shell growth. The polypeptide is Perlinhibin-related protein (Haliotis laevigata (Smooth Australian abalone)).